Reading from the N-terminus, the 1347-residue chain is MLNRENKTAITRKGMVSNRLNKFSIRKYTVGTASILVGTTLIFGLGNQEAKAAESTNKELNEATTSASDNQSSDKVDMQQLNQEDNTKNDNQKEMVSSQGNETTSNGNKSIEKESVQSTTGNKVEVSTAKSDEQASPKSTNEDLNTKQTISNQEALQPDLQENKSVVNAQPTNEENKKVDAKTESTTLNVKSDAIKSNAETLVDNNSNSNNENNADIILPKSTAPKRLNTRMRIAAVQPSSTEAKNVNDLITSNTTLTVVDADKNNKIVPAQDYLELKSQIKVDDKVKSGDYFTIKYSDTVQVYGLNPEDIKNIGDIKDPNNGETIATAKHDTANNLITYTFTDYVDRFNSVQMGINYSIYMDADTIPVSKNDVEFNVTIGNTTTKTTANIQYPDYVVNEKNSIGSAFTETVSHVGNKENPGYYKQTIYINPSENSLTNAKLKVQAYHSSYPNNIGQINKEVTDIKIYQVPKGYTLNKGYDVNTKELTDVTNQYLQKITYGDNNSAVIDFGNADSAYVVMVNTKFQYTTSESPTLVQMVTLSSDNSKSASMGNALGFTNNQSGGAGQEVYKIGNYVWEDTNKNGVQELGEKGVGNVTVTVFDNNTNTKVGEAVTKEDGSYLIPNLPNGDYRVEFSNLPKGYEVTPSKQGNNEELDSNGLSSVITVNGKDNLSADLGIYKPKYNLGDYVWEDTNKNGIQDQDEKGISGVTVTLKDENGNVLKTVTTDADGKYKFTDLDNGNYKVEFTTPEGYTPTTVTSGSDIEKDSNGLTTTGVINGADNMTLDSGFYKTPKYNLGNYVWEDTNKDGKQDSTEKGISGVTVTLKNENGEVLQTTKTDKDGKYQFTGLENGTYKVEFETPSGYTPTQVGSGTDEGIDSNGTSTTGVIKDKDNDTIDSGFYKPTYNLGDYVWEDTNKNGVQDKDEKGISGVTVTLKDENDKVLKTVTTDENGKYQFTDLNNGTYKVEFETPSGYTPTSVTSGNDTEKDSNGLTTTGVIKDADNMTLDSGFYKTSKYSLGDYVWYDSNKDGKQDSTEKGIKDVKVTLLNEKGEVIGTTKTDENGKYRFDNLDSGKYKVIFEKPAGLTQTGTNTTEDDKDADGGEVDVTITDHDDFTLDNGYFEEDTSDSDSDSDSDSDSDSDSDSDSDSDSDSDSDSDSDSDSDSDSDSDSDSDSDSDSDSDSDSDSDSDSDSDSDSDSDSDSDSDSDSDSDSDSDSDSDSDSDSDSDSDSDSESDSDSDSDSDSDSDSDSDSDSDSDSDSDSDSDSDSDSDSDSDSDSDSDSDSDSDSDAGKHTPVKPMSTTKDHHNKAKALPETGNENSGSNNATLFGGLFAALGSLLLFGRRKKQNK.

The signal sequence occupies residues 1-35; it reads MLNRENKTAITRKGMVSNRLNKFSIRKYTVGTASI. The short motif at 23–34 is the YSIRK-G/S signaling motif element; sequence FSIRKYTVGTAS. Positions 36 to 568 are ligand binding A region; sequence LVGTTLIFGL…NNQSGGAGQE (533 aa). Residues 55 to 185 are disordered; that stretch reads STNKELNEAT…NKKVDAKTES (131 aa). Polar residues-rich tracts occupy residues 62–71 and 94–109; these read EATTSASDNQ and EMVSSQGNETTSNGNK. A compositionally biased stretch (basic and acidic residues) spans 130–145; the sequence is KSDEQASPKSTNEDLN. 2 stretches are compositionally biased toward polar residues: residues 146 to 155 and 163 to 173; these read TKQTISNQEA and NKSVVNAQPTN. A compositionally biased stretch (basic and acidic residues) spans 174 to 183; the sequence is EENKKVDAKT. 5 consecutive CNA-B domains span residues 569 to 680, 681 to 791, 792 to 901, 902 to 1012, and 1013 to 1123; these read VYKI…IYKP, KYNL…YKTP, KYNL…FYKP, TYNL…YKTS, and KYSL…EEDT. Disordered regions lie at residues 857–883, 972–992, and 1078–1323; these read ETPSGYTPTQVGSGTDEGIDSNGTSTT, YTPTSVTSGNDTEKDSNGLTT, and EKPA…SNNA. 2 stretches are compositionally biased toward polar residues: residues 860-869 and 972-981; these read SGYTPTQVGS and YTPTSVTSGN. Acidic residues-rich tracts occupy residues 1091 to 1101 and 1118 to 1286; these read TEDDKDADGGE and YFEE…DSDS. The LPXTG sorting signal signature appears at 1310–1314; sequence LPETG. The residue at position 1313 (threonine 1313) is a Pentaglycyl murein peptidoglycan amidated threonine. Positions 1314–1347 are cleaved as a propeptide — removed by sortase; the sequence is GNENSGSNNATLFGGLFAALGSLLLFGRRKKQNK.

The protein belongs to the serine-aspartate repeat-containing protein (SDr) family. As to quaternary structure, interacts with host DSG1; this interaction increases S.aureus adherence to keratinocytes.

The protein localises to the secreted. Its subcellular location is the cell wall. In terms of biological role, cell surface-associated calcium-binding protein which plays an important role in adhesion and pathogenesis. Mediates interactions with components of the extracellular matrix such as host DSG1 to promote bacterial adhesion to host cells. Contributes to the resistance to killing by innate immune components such as neutrophils present in blood and thus attenuates bacterial clearance. This chain is Serine-aspartate repeat-containing protein D (sdrD), found in Staphylococcus aureus (strain MW2).